Consider the following 378-residue polypeptide: Apoptosis-inducing factor 1 (378 aa).

A helical membrane pass occupies residues 7-25 (NIVVVGAGVFGVSVANHLY). FAD is bound by residues 12–16 (GAGVF), arginine 51, lysine 56, and aspartate 283.

It belongs to the FAD-dependent oxidoreductase family. Requires FAD as cofactor.

Its subcellular location is the mitochondrion outer membrane. The protein resides in the nucleus. Functionally, putative FAD-dependent oxidoreductase involved in the resistance to cercosporin and other singlet oxygen-generating photosensitizers. Translocates from mitochondria to the nucleus under apoptotic conditions, where it degrades DNA and induces apoptosis. In Saccharomyces cerevisiae (strain ATCC 204508 / S288c) (Baker's yeast), this protein is Apoptosis-inducing factor 1 (AIF1).